A 359-amino-acid polypeptide reads, in one-letter code: DNA polymerase IV (359 aa).

In terms of domain architecture, UmuC spans 7 to 188 (IIHIDMDAFY…LPIGKFFGVG (182 aa)). Residues Asp-11 and Asp-106 each contribute to the Mg(2+) site. Residue Glu-107 is part of the active site.

This sequence belongs to the DNA polymerase type-Y family. In terms of assembly, monomer. Mg(2+) is required as a cofactor.

It is found in the cytoplasm. The catalysed reaction is DNA(n) + a 2'-deoxyribonucleoside 5'-triphosphate = DNA(n+1) + diphosphate. Its function is as follows. Poorly processive, error-prone DNA polymerase involved in untargeted mutagenesis. Copies undamaged DNA at stalled replication forks, which arise in vivo from mismatched or misaligned primer ends. These misaligned primers can be extended by PolIV. Exhibits no 3'-5' exonuclease (proofreading) activity. May be involved in translesional synthesis, in conjunction with the beta clamp from PolIII. The sequence is that of DNA polymerase IV from Clostridium perfringens (strain SM101 / Type A).